We begin with the raw amino-acid sequence, 378 residues long: Queuine tRNA-ribosyltransferase (378 aa).

Aspartate 89 acts as the Proton acceptor in catalysis. Residues 89-93, aspartate 143, glutamine 194, and glycine 221 contribute to the substrate site; that span reads DSGGF. The RNA binding stretch occupies residues 252–258; the sequence is GVGTPAN. The active-site Nucleophile is the aspartate 271. The Zn(2+) site is built by cysteine 309, cysteine 311, cysteine 314, and histidine 340.

The protein belongs to the queuine tRNA-ribosyltransferase family. As to quaternary structure, homodimer. Within each dimer, one monomer is responsible for RNA recognition and catalysis, while the other monomer binds to the replacement base PreQ1. The cofactor is Zn(2+).

The catalysed reaction is 7-aminomethyl-7-carbaguanine + guanosine(34) in tRNA = 7-aminomethyl-7-carbaguanosine(34) in tRNA + guanine. The protein operates within tRNA modification; tRNA-queuosine biosynthesis. Catalyzes the base-exchange of a guanine (G) residue with the queuine precursor 7-aminomethyl-7-deazaguanine (PreQ1) at position 34 (anticodon wobble position) in tRNAs with GU(N) anticodons (tRNA-Asp, -Asn, -His and -Tyr). Catalysis occurs through a double-displacement mechanism. The nucleophile active site attacks the C1' of nucleotide 34 to detach the guanine base from the RNA, forming a covalent enzyme-RNA intermediate. The proton acceptor active site deprotonates the incoming PreQ1, allowing a nucleophilic attack on the C1' of the ribose to form the product. After dissociation, two additional enzymatic reactions on the tRNA convert PreQ1 to queuine (Q), resulting in the hypermodified nucleoside queuosine (7-(((4,5-cis-dihydroxy-2-cyclopenten-1-yl)amino)methyl)-7-deazaguanosine). This is Queuine tRNA-ribosyltransferase from Lachnospira eligens (strain ATCC 27750 / DSM 3376 / VPI C15-48 / C15-B4) (Eubacterium eligens).